Reading from the N-terminus, the 343-residue chain is Anthranilate phosphoribosyltransferase (343 aa).

Residues glycine 84, 87–88, threonine 92, 94–97, 112–120, and serine 124 each bind 5-phospho-alpha-D-ribose 1-diphosphate; these read GD, NIST, and KHGNRSASS. Glycine 84 serves as a coordination point for anthranilate. Serine 96 contributes to the Mg(2+) binding site. Anthranilate is bound at residue asparagine 115. An anthranilate-binding site is contributed by arginine 170. Residues aspartate 229 and glutamate 230 each coordinate Mg(2+).

It belongs to the anthranilate phosphoribosyltransferase family. As to quaternary structure, homodimer. Mg(2+) is required as a cofactor.

The enzyme catalyses N-(5-phospho-beta-D-ribosyl)anthranilate + diphosphate = 5-phospho-alpha-D-ribose 1-diphosphate + anthranilate. It functions in the pathway amino-acid biosynthesis; L-tryptophan biosynthesis; L-tryptophan from chorismate: step 2/5. Its function is as follows. Catalyzes the transfer of the phosphoribosyl group of 5-phosphorylribose-1-pyrophosphate (PRPP) to anthranilate to yield N-(5'-phosphoribosyl)-anthranilate (PRA). The chain is Anthranilate phosphoribosyltransferase from Bordetella avium (strain 197N).